A 925-amino-acid chain; its full sequence is Protein translocase subunit SecA (925 aa).

Residues Q87, 105 to 109 (GEGKT), and D512 contribute to the ATP site. Residues C910, C912, C921, and H922 each contribute to the Zn(2+) site.

Belongs to the SecA family. In terms of assembly, monomer and homodimer. Part of the essential Sec protein translocation apparatus which comprises SecA, SecYEG and auxiliary proteins SecDF-YajC and YidC. Requires Zn(2+) as cofactor.

Its subcellular location is the cell inner membrane. The protein localises to the cytoplasm. It carries out the reaction ATP + H2O + cellular proteinSide 1 = ADP + phosphate + cellular proteinSide 2.. Part of the Sec protein translocase complex. Interacts with the SecYEG preprotein conducting channel. Has a central role in coupling the hydrolysis of ATP to the transfer of proteins into and across the cell membrane, serving both as a receptor for the preprotein-SecB complex and as an ATP-driven molecular motor driving the stepwise translocation of polypeptide chains across the membrane. This Psychrobacter sp. (strain PRwf-1) protein is Protein translocase subunit SecA.